A 347-amino-acid polypeptide reads, in one-letter code: NADH-ubiquinone oxidoreductase chain 2 (347 aa).

A run of 10 helical transmembrane segments spans residues 3 to 23, 25 to 45, 59 to 79, 93 to 115, 150 to 170, 178 to 198, 200 to 220, 240 to 260, 274 to 294, and 326 to 346; these read PLAL…TMMS, HWLT…PILM, YFMT…INLM, VASN…HFWV, NTNL…WGGL, ILAY…PFNP, LTLL…MILA, MTIM…LSGF, NSII…YFYM, and LPTL…ISML.

This sequence belongs to the complex I subunit 2 family. In terms of assembly, core subunit of respiratory chain NADH dehydrogenase (Complex I) which is composed of 45 different subunits. Interacts with TMEM242.

It localises to the mitochondrion inner membrane. The enzyme catalyses a ubiquinone + NADH + 5 H(+)(in) = a ubiquinol + NAD(+) + 4 H(+)(out). Core subunit of the mitochondrial membrane respiratory chain NADH dehydrogenase (Complex I) which catalyzes electron transfer from NADH through the respiratory chain, using ubiquinone as an electron acceptor. Essential for the catalytic activity and assembly of complex I. The polypeptide is NADH-ubiquinone oxidoreductase chain 2 (Mammuthus primigenius (Siberian woolly mammoth)).